The primary structure comprises 253 residues: ATP synthase subunit b 1 (253 aa).

The helical transmembrane segment at 2 to 22 threads the bilayer; sequence LIDWFTVIAELVNFLILVWLL.

The protein belongs to the ATPase B chain family. In terms of assembly, F-type ATPases have 2 components, F(1) - the catalytic core - and F(0) - the membrane proton channel. F(1) has five subunits: alpha(3), beta(3), gamma(1), delta(1), epsilon(1). F(0) has four main subunits: a(1), b(2) and c(10-14). The alpha and beta chains form an alternating ring which encloses part of the gamma chain. F(1) is attached to F(0) by a central stalk formed by the gamma and epsilon chains, while a peripheral stalk is formed by the delta and b chains.

It localises to the cell inner membrane. Functionally, f(1)F(0) ATP synthase produces ATP from ADP in the presence of a proton or sodium gradient. F-type ATPases consist of two structural domains, F(1) containing the extramembraneous catalytic core and F(0) containing the membrane proton channel, linked together by a central stalk and a peripheral stalk. During catalysis, ATP synthesis in the catalytic domain of F(1) is coupled via a rotary mechanism of the central stalk subunits to proton translocation. Its function is as follows. Component of the F(0) channel, it forms part of the peripheral stalk, linking F(1) to F(0). The sequence is that of ATP synthase subunit b 1 from Prosthecochloris aestuarii (strain DSM 271 / SK 413).